Reading from the N-terminus, the 278-residue chain is MALKTFNPTTPSQRQLVIVDRSSLYKGKPVKSLTEGLSSKGGRNNTGRITVRFQGGGHKRTYRLVDFKRRKFDVEATVERIEYDPNRTAYIALVKYADGDQAYILAPQRLAAGDKVIASEKAVDVKPGNTMPLQFIPVGSIIHNVEMKPGKGGQIARSAGGYAQLVGRDQGMAILRLNSGEQRLVHGTCLATIGAVSNPDHGNINDGKAGRSRWRGKKPHVRGVVMNPVDHPHGGGEGRTSGGRHPVTPWGKPTKGKRTRSNKSTDKMIMRSRHQRKK.

A disordered region spans residues H201–K278. Basic residues predominate over residues G210–V221.

Belongs to the universal ribosomal protein uL2 family. Part of the 50S ribosomal subunit. Forms a bridge to the 30S subunit in the 70S ribosome.

In terms of biological role, one of the primary rRNA binding proteins. Required for association of the 30S and 50S subunits to form the 70S ribosome, for tRNA binding and peptide bond formation. It has been suggested to have peptidyltransferase activity; this is somewhat controversial. Makes several contacts with the 16S rRNA in the 70S ribosome. This is Large ribosomal subunit protein uL2 from Rhizobium rhizogenes (strain K84 / ATCC BAA-868) (Agrobacterium radiobacter).